Reading from the N-terminus, the 205-residue chain is Holliday junction branch migration complex subunit RuvA (205 aa).

A domain I region spans residues 1-64; it reads MIGKLKGIID…EDQIKLFGFR (64 aa). The interval 65 to 143 is domain II; that stretch reads TDTEREWFRL…ALSAVDPAVV (79 aa). The interval 144–154 is flexible linker; that stretch reads KLSGAIDDNRA. The segment at 154 to 205 is domain III; that stretch reads APRAVTDAISALVNLGYGQPQAAAAVATASRTAGEDAETAQLIKLGLKELSK.

The protein belongs to the RuvA family. As to quaternary structure, homotetramer. Forms an RuvA(8)-RuvB(12)-Holliday junction (HJ) complex. HJ DNA is sandwiched between 2 RuvA tetramers; dsDNA enters through RuvA and exits via RuvB. An RuvB hexamer assembles on each DNA strand where it exits the tetramer. Each RuvB hexamer is contacted by two RuvA subunits (via domain III) on 2 adjacent RuvB subunits; this complex drives branch migration. In the full resolvosome a probable DNA-RuvA(4)-RuvB(12)-RuvC(2) complex forms which resolves the HJ.

It is found in the cytoplasm. Functionally, the RuvA-RuvB-RuvC complex processes Holliday junction (HJ) DNA during genetic recombination and DNA repair, while the RuvA-RuvB complex plays an important role in the rescue of blocked DNA replication forks via replication fork reversal (RFR). RuvA specifically binds to HJ cruciform DNA, conferring on it an open structure. The RuvB hexamer acts as an ATP-dependent pump, pulling dsDNA into and through the RuvAB complex. HJ branch migration allows RuvC to scan DNA until it finds its consensus sequence, where it cleaves and resolves the cruciform DNA. This Rhodopseudomonas palustris (strain TIE-1) protein is Holliday junction branch migration complex subunit RuvA.